A 125-amino-acid polypeptide reads, in one-letter code: Small ribosomal subunit protein uS12 (125 aa).

Asp89 bears the 3-methylthioaspartic acid mark.

The protein belongs to the universal ribosomal protein uS12 family. As to quaternary structure, part of the 30S ribosomal subunit. Contacts proteins S8 and S17. May interact with IF1 in the 30S initiation complex.

Functionally, with S4 and S5 plays an important role in translational accuracy. Interacts with and stabilizes bases of the 16S rRNA that are involved in tRNA selection in the A site and with the mRNA backbone. Located at the interface of the 30S and 50S subunits, it traverses the body of the 30S subunit contacting proteins on the other side and probably holding the rRNA structure together. The combined cluster of proteins S8, S12 and S17 appears to hold together the shoulder and platform of the 30S subunit. The chain is Small ribosomal subunit protein uS12 from Cupriavidus pinatubonensis (strain JMP 134 / LMG 1197) (Cupriavidus necator (strain JMP 134)).